Reading from the N-terminus, the 24-residue chain is Humanin-like 3 (24 aa).

The protein belongs to the humanin family. As to expression, highly expressed in testis. Also expressed in kidney, heart, skeletal muscles and brain.

The protein resides in the secreted. It localises to the cytoplasm. Its function is as follows. Plays a role as a neuroprotective and antiapoptotic factor. This chain is Humanin-like 3, found in Homo sapiens (Human).